Here is a 361-residue protein sequence, read N- to C-terminus: Myb/SANT-like DNA-binding domain-containing protein 7 (361 aa).

One can recognise a Myb-like domain in the interval 11–70 (RWSRQETRTLLSILGEAEYIQRLQTVHHNADVYQAVSKRMQQEGFRRTERQCRSKFKVLK). Disordered regions lie at residues 174–198 (TSDL…SYSS) and 217–272 (RLGV…ARRR). Polar residues-rich tracts occupy residues 187–198 (AGCSQGTPSYSS) and 226–249 (PCTS…SSSR).

This is Myb/SANT-like DNA-binding domain-containing protein 7 from Homo sapiens (Human).